Here is a 325-residue protein sequence, read N- to C-terminus: Polyamine aminopropyltransferase (325 aa).

A PABS domain is found at 11–248; the sequence is SSMAEDFAVE…TLWAMAMASD (238 aa). Gln44 is a binding site for S-methyl-5'-thioadenosine. Spermidine-binding residues include His75 and Asp99. S-methyl-5'-thioadenosine contacts are provided by residues Glu119 and 151–152; that span reads DG. Residue Asp169 is the Proton acceptor of the active site. Residue Pro176 coordinates S-methyl-5'-thioadenosine.

It belongs to the spermidine/spermine synthase family. Homodimer or homotetramer.

The protein localises to the cytoplasm. It catalyses the reaction S-adenosyl 3-(methylsulfanyl)propylamine + putrescine = S-methyl-5'-thioadenosine + spermidine + H(+). It participates in amine and polyamine biosynthesis; spermidine biosynthesis; spermidine from putrescine: step 1/1. In terms of biological role, catalyzes the irreversible transfer of a propylamine group from the amino donor S-adenosylmethioninamine (decarboxy-AdoMet) to putrescine (1,4-diaminobutane) to yield spermidine. The protein is Polyamine aminopropyltransferase of Nitrosomonas europaea (strain ATCC 19718 / CIP 103999 / KCTC 2705 / NBRC 14298).